Here is a 146-residue protein sequence, read N- to C-terminus: Large ribosomal subunit protein bL19 (146 aa).

It belongs to the bacterial ribosomal protein bL19 family.

This protein is located at the 30S-50S ribosomal subunit interface and may play a role in the structure and function of the aminoacyl-tRNA binding site. The chain is Large ribosomal subunit protein bL19 from Bartonella bacilliformis (strain ATCC 35685 / KC583 / Herrer 020/F12,63).